Reading from the N-terminus, the 487-residue chain is 3-ketoacyl-CoA synthase 17 (487 aa).

The next 2 membrane-spanning stretches (helical) occupy residues 23–43 and 57–77; these read LITH…FMNV and STGF…FFMS. The region spanning 74-363 is the FAE domain; that stretch reads FFMSRPRSIY…FFATFVAKRL (290 aa). Catalysis depends on residues Cys-218, His-297, His-382, His-386, His-415, and Asn-419.

This sequence belongs to the thiolase-like superfamily. Chalcone/stilbene synthases family. In terms of tissue distribution, expressed in flowers.

The protein resides in the membrane. The catalysed reaction is a very-long-chain acyl-CoA + malonyl-CoA + H(+) = a very-long-chain 3-oxoacyl-CoA + CO2 + CoA. The protein operates within lipid metabolism; fatty acid biosynthesis. With respect to regulation, inhibited by K3 herbicides such as alachlor, allidochlor, anilofos, cafenstrole, fentrazamide and flufenacet. Strongly inhibited by metazachlor. In terms of biological role, active on saturated acyl-CoAs up to C22. Mediates the synthesis of VLCFAs from 20 to 26 carbons in length (e.g. C20:1, C20, C24, C26). In Arabidopsis thaliana (Mouse-ear cress), this protein is 3-ketoacyl-CoA synthase 17.